The chain runs to 727 residues: C-terminal-binding protein 1 (727 aa).

The THAP-type zinc-finger motif lies at 5 to 60 (CGFPNCKFRSRYRGLEDNRHFYRIPKRPLILRQRWLTAIGRTEETVVSQLRICSAH). A disordered region spans residues 64–158 (GEKKEGDIPV…HPPVLPDPQQ (95 aa)). The segment covering 77–94 (TVDKQIKIELPPKESKNS) has biased composition (basic and acidic residues). NAD(+)-binding positions include Y251, 331–336 (LGCGRV), D355, 388–394 (CNLGDET), 415–417 (TSH), D441, and 467–470 (HSAW). Low complexity predominate over residues 587 to 613 (ANAQRGSPANRSSRSSPSPHTNKSSVS). Disordered regions lie at residues 587–629 (ANAQ…SPAA) and 652–681 (APNG…GDEN).

It belongs to the D-isomer specific 2-hydroxyacid dehydrogenase family. As to quaternary structure, homodimer.

Functionally, binds DNA and represses gene expression. Plays a role in regulation of life span, possibly by regulating transcription of genes important for lipid metabolism. This is C-terminal-binding protein 1 from Caenorhabditis elegans.